A 332-amino-acid polypeptide reads, in one-letter code: Methionyl-tRNA formyltransferase (332 aa).

124–127 serves as a coordination point for (6S)-5,6,7,8-tetrahydrofolate; the sequence is SLLP.

This sequence belongs to the Fmt family.

It carries out the reaction L-methionyl-tRNA(fMet) + (6R)-10-formyltetrahydrofolate = N-formyl-L-methionyl-tRNA(fMet) + (6S)-5,6,7,8-tetrahydrofolate + H(+). In terms of biological role, attaches a formyl group to the free amino group of methionyl-tRNA(fMet). The formyl group appears to play a dual role in the initiator identity of N-formylmethionyl-tRNA by promoting its recognition by IF2 and preventing the misappropriation of this tRNA by the elongation apparatus. This Polynucleobacter asymbioticus (strain DSM 18221 / CIP 109841 / QLW-P1DMWA-1) (Polynucleobacter necessarius subsp. asymbioticus) protein is Methionyl-tRNA formyltransferase.